A 245-amino-acid chain; its full sequence is tRNA pseudouridine synthase A (245 aa).

The Nucleophile role is filled by D52. Y111 contacts substrate.

Belongs to the tRNA pseudouridine synthase TruA family. Homodimer.

It catalyses the reaction uridine(38/39/40) in tRNA = pseudouridine(38/39/40) in tRNA. In terms of biological role, formation of pseudouridine at positions 38, 39 and 40 in the anticodon stem and loop of transfer RNAs. The polypeptide is tRNA pseudouridine synthase A (Nitrobacter hamburgensis (strain DSM 10229 / NCIMB 13809 / X14)).